A 612-amino-acid polypeptide reads, in one-letter code: Glutamine--fructose-6-phosphate aminotransferase [isomerizing] (612 aa).

Cysteine 2 serves as the catalytic Nucleophile; for GATase activity. In terms of domain architecture, Glutamine amidotransferase type-2 spans 2–220 (CGIVGAIRAH…DGDIALLASD (219 aa)). SIS domains lie at 288–428 (AKSV…VRGL) and 461–602 (WAQQ…VDKP). Lysine 607 serves as the catalytic For Fru-6P isomerization activity.

Homodimer.

It localises to the cytoplasm. It carries out the reaction D-fructose 6-phosphate + L-glutamine = D-glucosamine 6-phosphate + L-glutamate. Functionally, catalyzes the first step in hexosamine metabolism, converting fructose-6P into glucosamine-6P using glutamine as a nitrogen source. The chain is Glutamine--fructose-6-phosphate aminotransferase [isomerizing] from Neisseria meningitidis serogroup B (strain ATCC BAA-335 / MC58).